A 511-amino-acid chain; its full sequence is MSEYLLEMRNIGKEFNGVKALDGIYLKVRAGECVGLCGENGAGKYTLMKVLSGVYPHGTWTGEIFWEGKELKASGIRDTEAAGIVIIHQELMMVPHLSVAENIFLGCEPTTGGFIDYDQMNARAAELLARLKINDINVALPVYHYSGGKQQLIEIAKAINKNAKLLILDEPTSALTASETRVLIDLIKDFKKQGMACVYISHKLDEVAEISDTVTVIRDGAHIATRPMSELTTPDIITMMVGREMKNLFPREPHDIGEVMFEARNISCWDVTNPDRKVVDDVSFALRRGEILGIAGLVGAGRTELVSSLFGVWPGACQGQVFLEGKEIKIRTPRDAVRQGICMVPEDRKRDGILPIMPVGHNMTISVLDRFSLRGLIDKDAELVAIQREILRLKVKTADPMLAIASLSGGNQQKAVLSKMMLPDPKVLILDEPTRGVDVGAKYEIYKLIFALARQGVSILMVSSEMPEVLGISDRVLVIGEGKLRGDFPNENLTQEKVLAAAIGKPATNAA.

2 consecutive ABC transporter domains span residues 6–244 (LEMR…VGRE) and 261–506 (FEAR…IGKP).

It belongs to the ABC transporter superfamily. Xylose importer (TC 3.A.1.2.4) family. In terms of assembly, the complex is composed of two ATP-binding proteins (XylG), two transmembrane proteins (XylH) and a solute-binding protein (XylF).

Its subcellular location is the cell inner membrane. It catalyses the reaction D-xylose(out) + ATP + H2O = D-xylose(in) + ADP + phosphate + H(+). Functionally, part of the ABC transporter complex XylFGH involved in xylose import. Responsible for energy coupling to the transport system. The polypeptide is Xylose import ATP-binding protein XylG (Brucella melitensis biotype 1 (strain ATCC 23456 / CCUG 17765 / NCTC 10094 / 16M)).